Consider the following 1977-residue polypeptide: Echinoderm microtubule-associated protein-like 5 (1977 aa).

WD repeat units follow at residues 59 to 100 (GHSD…TVSV), 104 to 145 (VHTH…MLSM), 148 to 187 (GHTDRIFDISWDLYQPNKLVSCGVKHIKFWSLCGNALTPK), 195 to 233 (GDLQTILCLACARDELTYSGALNGDIYVWKGINLIRTIQ), 235 to 273 (AHTAGIFSMNSCEEGFATGGRDGCIRLWDLTFKPITVID), 280 to 321 (GYKG…LIMQ), 323 to 362 (HCEGELWALAVHPTKPLAVTGSDDRSVRIWSLVDHALIAR), 406 to 445 (DRKEAIHELKYSPDGAYLAVGCNDSSVDIYGVAQRYKKVG), 449 to 488 (GSLSFITHLDWSSDSRYLQTNDGSGKRLLYKMPGGKEVTS), and 561 to 601 (GHSA…KLKD). Residues 609–629 (ESLAESNSDESDSDLSDVPEL) are disordered. The segment covering 615–629 (NSDESDSDLSDVPEL) has biased composition (acidic residues). WD repeat units lie at residues 725-766 (GHDD…PLSI), 770-811 (YHQY…KLSV), 814-853 (GSKDKIFVVKMNPYVPDKLITAGIKHMKFWRRAGGGLIGK), 861-900 (GKNDTMMCAVYGWTEEMAFSGTSTGDVCIWRDVFLVKTVK), 901-940 (AHDGPVFSMHALEKGFVTGGKDGMVALWDDSFERCLKTYA), 996-1035 (HMEGEVWGLATHPYLPICATVSDDKTLRIWDLSPSHCMLA), 1038-1077 (KLKKGGRCCCFSPDGKALAVGLNDGSFLMANADTLEDLVS), 1080-1120 (HRKD…RVGV), and 1236-1276 (AHST…HREK). Disordered stretches follow at residues 1276–1297 (KKYCDSEESDIDSEEDGGYDSD) and 1323–1363 (PHLQ…NVGK). Residues 1281-1294 (SEESDIDSEEDGGY) show a composition bias toward acidic residues. Residues 1326–1337 (QQKEPSVDERQG) are compositionally biased toward basic and acidic residues. 10 WD repeats span residues 1420–1471 (EHND…TLSI), 1475–1516 (SHSK…KIAS), 1519–1558 (GHNQRIFVAEFRPDSDTQFVSVGIKHVKFWTLAGRALLSK), 1568–1606 (ARMQTMLAVAFGANNLTFTGTISGDVCVWKDHILCRVVA), 1608–1654 (AHNG…RAFR), 1699–1739 (GHVD…MLNK), 1741–1782 (NLGH…GKKR), 1783–1822 (DRRCAIHDIRFSPDSRYLAVGSSENSVDFYDLTLGPTLNR), 1895–1934 (AEKADVTCACVSHSGISLVTGDDFGMVKLYDFPCPEKFAK), and 1940–1977 (GHSPHVTNIRFTSGDRHVVSAGGDDCSLFVWKCVHMPH).

The protein belongs to the WD repeat EMAP family.

The protein resides in the cytoplasm. Its subcellular location is the cytoskeleton. Its function is as follows. May modify the assembly dynamics of microtubules, such that microtubules are slightly longer, but more dynamic. This Mus musculus (Mouse) protein is Echinoderm microtubule-associated protein-like 5 (Eml5).